Consider the following 153-residue polypeptide: Ribosomal RNA large subunit methyltransferase H (153 aa).

Positions 71 and 102 each coordinate S-adenosyl-L-methionine.

It belongs to the RNA methyltransferase RlmH family. As to quaternary structure, homodimer.

The protein resides in the cytoplasm. The catalysed reaction is pseudouridine(1915) in 23S rRNA + S-adenosyl-L-methionine = N(3)-methylpseudouridine(1915) in 23S rRNA + S-adenosyl-L-homocysteine + H(+). Its function is as follows. Specifically methylates the pseudouridine at position 1915 (m3Psi1915) in 23S rRNA. This Anaeromyxobacter dehalogenans (strain 2CP-C) protein is Ribosomal RNA large subunit methyltransferase H.